The following is a 330-amino-acid chain: AKTTAPSVYPLAPVCGDTTGSSVTLGCLVKGYFPEPVTLTWNSGSLSSGVHTFPAVLQSDLYTLSSSVTVTSSTWPSQSITCNVAHPASSTKVDKKIEPRGPTIKPCPPCKCPAPNLLGGPSVFIFPPKIKDVLMISLSPIVTCVVVDVSEDDPDVQISWFVNNVEVHTAQTQTHREDYNSTLRVVSALPIQHQDWMSGKEFKCKVNNKDLPAPIERTISKPKGSVRAPQVYVLPPPEEEMTKKQVTLTCMVTDFMPEDIYVEWTNNGKTELNYKNTEPVLDSDGSYFMYSKLRVEKKNWVERNSYSCSVVHEGLHNHHTTKSFSRTPGK.

3 consecutive Ig-like domains span residues 6–98 (PSVY…KKIE), 121–220 (PSVF…RTIS), and 229–325 (PQVY…KSFS). 3 cysteine pairs are disulfide-bonded: cysteine 27-cysteine 82, cysteine 144-cysteine 204, and cysteine 250-cysteine 308. Asparagine 180 is a glycosylation site (N-linked (GlcNAc...) asparagine).

The polypeptide is Ig gamma-2A chain C region, A allele (Ighg) (Mus musculus (Mouse)).